The sequence spans 103 residues: CLAVATA3/ESR (CLE)-related protein 16 (103 aa).

Residues 1–21 (MEACSRKRRRRRAYTTSTTGY) form the signal peptide. Residues 71 to 103 (VSFTGQRREEENRDEVYKDDKRLVHTGPNPLHN) form a disordered region. The segment covering 76 to 93 (QRREEENRDEVYKDDKRL) has biased composition (basic and acidic residues). Proline 98 bears the Hydroxyproline mark. Proline 98 is a glycosylation site (O-linked (Ara...) hydroxyproline).

Belongs to the CLV3/ESR signal peptide family. Post-translationally, the O-glycosylation (arabinosylation) of the hydroxyproline Pro-98 enhances binding affinity of the CLE16p peptide for its receptor. As to expression, expressed in roots, stems, apex, seedlings, leaves, flowers and siliques.

It is found in the secreted. The protein localises to the extracellular space. In terms of biological role, extracellular signal peptide that regulates cell fate. Represses root apical meristem maintenance. Regulates the transition of protophloem cells from proliferation to differentiation, thus impinging on postembryonic growth capacity of the root meristem; this signaling pathway requires CRN and CLV2. This chain is CLAVATA3/ESR (CLE)-related protein 16, found in Arabidopsis thaliana (Mouse-ear cress).